Consider the following 91-residue polypeptide: Salivary lectin pathway inhibitor (91 aa).

Residues 1 to 21 (MGLTETTLVLVSLAFFASAVA) form the signal peptide. Residues N26 and N87 are each glycosylated (N-linked (GlcNAc...) asparagine).

The protein belongs to the salp14 family. In terms of processing, glycosylated; deglycosylation largely abrogates the complement inhibitory effect. In terms of tissue distribution, nymph salivary gland (at protein level). Saliva (at protein level). Not detected in midgut.

Its subcellular location is the secreted. In terms of biological role, inhibits the lectin pathway of complement system activation in the host by reducing binding of mannose-binding lectin and L-ficolin to their ligands. Does not affect the classical and alternative pathways of complement system activation in the host. Functionally, (Microbial infection) Protects Borrelia garinii (strain A87S) from host complement-mediated killing by preventing deposition of host C5b-9 membrane attack complexes on the surface of spirochetes. Inhibits phagocytosis of B.garinii (strain A87S) by human neutrophils. Impairs Borrelia-induced complement-mediated chemotaxis of human polymorphonuclear leukocytes. Its function is as follows. (Microbial infection) Protects Borrelia burgdorferi (strain N40), which is resistant to normal human serum, from Borrelia-opsonizing antibody-mediated complement-dependent killing. This chain is Salivary lectin pathway inhibitor, found in Ixodes scapularis (Black-legged tick).